Consider the following 423-residue polypeptide: Glutamate-1-semialdehyde 2,1-aminomutase (423 aa).

Residue Lys266 is modified to N6-(pyridoxal phosphate)lysine.

Belongs to the class-III pyridoxal-phosphate-dependent aminotransferase family. HemL subfamily. In terms of assembly, homodimer. The cofactor is pyridoxal 5'-phosphate.

Its subcellular location is the cytoplasm. The catalysed reaction is (S)-4-amino-5-oxopentanoate = 5-aminolevulinate. It participates in porphyrin-containing compound metabolism; protoporphyrin-IX biosynthesis; 5-aminolevulinate from L-glutamyl-tRNA(Glu): step 2/2. This is Glutamate-1-semialdehyde 2,1-aminomutase from Nitratidesulfovibrio vulgaris (strain DP4) (Desulfovibrio vulgaris).